A 161-amino-acid chain; its full sequence is Protein-export protein SecB (161 aa).

This sequence belongs to the SecB family. Homotetramer, a dimer of dimers. One homotetramer interacts with 1 SecA dimer.

The protein localises to the cytoplasm. One of the proteins required for the normal export of preproteins out of the cell cytoplasm. It is a molecular chaperone that binds to a subset of precursor proteins, maintaining them in a translocation-competent state. It also specifically binds to its receptor SecA. The sequence is that of Protein-export protein SecB from Shewanella pealeana (strain ATCC 700345 / ANG-SQ1).